The chain runs to 158 residues: C-type lectin galactose-binding isoform (158 aa).

The first 23 residues, 1-23 (MGRFLLVTLSLLVMAFFLNGANS), serve as a signal peptide directing secretion. Disulfide bonds link cysteine 26-cysteine 37, cysteine 54-cysteine 154, and cysteine 129-cysteine 146. The 123-residue stretch at 33 to 155 (RNGFCYKVFN…CTALRPFLCQ (123 aa)) folds into the C-type lectin domain. Residues glutamine 119, aspartate 121, and glutamate 127 each contribute to the Ca(2+) site. Residues 119-121 (QPD) carry the Galactose-binding motif. Asparagine 134 carries an N-linked (GlcNAc...) asparagine glycan. 2 residues coordinate Ca(2+): asparagine 142 and aspartate 143.

This sequence belongs to the true venom lectin family. In terms of assembly, dimer. Probably disulfide-linked homodimer. As to expression, expressed by the venom gland.

The protein resides in the secreted. In terms of biological role, galactose-binding lectin that binds to and agglutinates erythrocytes in a calcium-dependent manner. The sequence is that of C-type lectin galactose-binding isoform from Pseudechis australis (Mulga snake).